The chain runs to 386 residues: MSKIKTHSTGSKRTVPFYKLPPPVPLPPLPPPDPTRYFSTEKYIALSKDEKFKFDDYDVNDETLKKVVLNEIGKCPDIWSSRSQAAIMEHYPIVATETYRRTGLLLSIKSLKQIYKCGKDNLRNRLRVAIVSKRLTPAQVEAYMWRWEFYGFIRYYRDYTQRWEADLLKDLDVVLGLEARRASKNMEKVDSGELMEPMEPMDSTMDEMCVEEEPYEETGSNWSDPAPEPSQSKSQSPEAKYPQAYLLPEADEVYNPDDFYQEEHESASNAMYRIAFSQQYGGGGSPAVQKPVTFSAQPAPAPVREAPSPVVENVSSSSFTPKPPAMINNFGEEMNQITYQAIRIAREQPERLKLLRKALFDVVLAFDQKEYADVGDLYRDLAQKNS.

The tract at residues 175–285 (LGLEARRASK…FSQQYGGGGS (111 aa)) is sufficient for interaction with lin-35. The segment at 212–240 (EEPYEETGSNWSDPAPEPSQSKSQSPEAK) is disordered. Residues 229–240 (PSQSKSQSPEAK) are compositionally biased toward low complexity.

Belongs to the lin-8 family. In terms of assembly, interacts with lin-35 (via C-terminus). As to expression, widely expressed throughout development, with particularly prominent expression in the germline and in neuronal nuclei of the head (at protein level).

The protein localises to the nucleus. Its function is as follows. Acts as a synthetic multivulva class A (synMuvA) protein and redundantly inhibits lin-3/EGF expression to prevent inappropriate vulva induction. In Caenorhabditis elegans, this protein is Protein lin-8.